The following is a 288-amino-acid chain: Serine/threonine-protein phosphatase PGAM5, mitochondrial (288 aa).

Residues methionine 1 to alanine 6 lie on the Mitochondrial matrix side of the membrane. Residues leucine 7–glycine 29 form a helical membrane-spanning segment. The Mitochondrial intermembrane portion of the chain corresponds to lysine 30 to serine 288. An interaction with KEAP1 region spans residues asparagine 76 to glutamate 81. 2 positions are modified to phosphoserine: serine 79 and serine 86. Lysine 115, lysine 143, and lysine 190 each carry N6-acetyllysine.

This sequence belongs to the phosphoglycerate mutase family. BPG-dependent PGAM subfamily. Dimer. Forms a ternary complex with NFE2L2 and KEAP1. Interacts with BCL2L1 and MAP3K5. Upon TNF-induced necrosis, forms in complex with RIPK1, RIPK3 and MLKL; the formation of this complex leads to PGAM5 phosphorylation. Isoform 2, but not isoform 1, interacts with DNM1L; this interaction leads to DNM1L dephosphorylation and activation and eventually to mitochondria fragmentation. In terms of processing, phosphorylated by the RIPK1/RIPK3 complex under necrotic conditions. This phosphorylation increases PGAM5 phosphatase activity. Proteolytically cleaved by PARL in response to loss of mitochondrial membrane potential.

The protein localises to the mitochondrion outer membrane. It is found in the mitochondrion inner membrane. The enzyme catalyses O-phospho-L-seryl-[protein] + H2O = L-seryl-[protein] + phosphate. The catalysed reaction is O-phospho-L-threonyl-[protein] + H2O = L-threonyl-[protein] + phosphate. In terms of biological role, mitochondrial serine/threonine phosphatase that dephosphorylates various substrates and thus plays a role in different biological processes including cellular senescence or mitophagy. Modulates cellular senescence by regulating mitochondrial dynamics. Mechanistically, participates in mitochondrial fission through dephosphorylating DNM1L/DRP1. Additionally, dephosphorylates MFN2 in a stress-sensitive manner and consequently protects it from ubiquitination and degradation to promote mitochondrial network formation. Regulates mitophagy independent of PARKIN by interacting with and dephosphorylating FUNDC1, which interacts with LC3. Regulates anti-oxidative response by forming a tertiary complex with KEAP1 and NRF2. Regulates necroptosis by acting as a RIPK3 target and recruiting the RIPK1-RIPK3-MLKL necrosis 'attack' complex to mitochondria. The polypeptide is Serine/threonine-protein phosphatase PGAM5, mitochondrial (Pgam5) (Mus musculus (Mouse)).